A 495-amino-acid polypeptide reads, in one-letter code: tRNA(Ile)-lysidine synthase (495 aa).

26 to 31 (SGGSDS) serves as a coordination point for ATP.

Belongs to the tRNA(Ile)-lysidine synthase family.

It is found in the cytoplasm. The catalysed reaction is cytidine(34) in tRNA(Ile2) + L-lysine + ATP = lysidine(34) in tRNA(Ile2) + AMP + diphosphate + H(+). Functionally, ligates lysine onto the cytidine present at position 34 of the AUA codon-specific tRNA(Ile) that contains the anticodon CAU, in an ATP-dependent manner. Cytidine is converted to lysidine, thus changing the amino acid specificity of the tRNA from methionine to isoleucine. The sequence is that of tRNA(Ile)-lysidine synthase from Bartonella tribocorum (strain CIP 105476 / IBS 506).